The chain runs to 460 residues: Chromosomal replication initiator protein DnaA (460 aa).

The domain I, interacts with DnaA modulators stretch occupies residues 1–91 (MNLTSPKVST…SLWQSEDKSI (91 aa)). A domain II region spans residues 91 to 122 (IRSIDIQVIEERNSNFNVILKNREESNHNLGS). The tract at residues 123 to 342 (PLDPRFTFDN…GALNKVTHTS (220 aa)) is domain III, AAA+ region. ATP contacts are provided by G169, G171, K172, and T173. Residues 343 to 460 (LIGRSMTVES…EINRLKKMFK (118 aa)) are domain IV, binds dsDNA.

It belongs to the DnaA family. Oligomerizes as a right-handed, spiral filament on DNA at oriC.

The protein localises to the cytoplasm. In terms of biological role, plays an essential role in the initiation and regulation of chromosomal replication. ATP-DnaA binds to the origin of replication (oriC) to initiate formation of the DNA replication initiation complex once per cell cycle. Binds the DnaA box (a 9 base pair repeat at the origin) and separates the double-stranded (ds)DNA. Forms a right-handed helical filament on oriC DNA; dsDNA binds to the exterior of the filament while single-stranded (ss)DNA is stabiized in the filament's interior. The ATP-DnaA-oriC complex binds and stabilizes one strand of the AT-rich DNA unwinding element (DUE), permitting loading of DNA polymerase. After initiation quickly degrades to an ADP-DnaA complex that is not apt for DNA replication. Binds acidic phospholipids. The protein is Chromosomal replication initiator protein DnaA of Wolbachia pipientis wMel.